Reading from the N-terminus, the 132-residue chain is uncharacterized protein (132 aa).

Belongs to the mycobacterial PPE family.

This is an uncharacterized protein from Mycobacterium tuberculosis (strain ATCC 25618 / H37Rv).